A 125-amino-acid polypeptide reads, in one-letter code: E4-ORF1 (125 aa).

The PDZ-binding signature appears at 122 to 125 (ATLV).

It belongs to the dUTPase family. In terms of assembly, binds to human MPDZ.

It localises to the host cytoplasm. It carries out the reaction dUTP + H2O = dUMP + diphosphate + H(+). Plays a key role in virus oncogenecity in animals. Binds and sequesters human MUPP1/MPDZ protein in the cytoplasm, preventing it from playing a role in cellular proliferation regulation. Induces cell transformation, probably by inactivating MPDZ protein. This is E4-ORF1 (E4) from Homo sapiens (Human).